The primary structure comprises 457 residues: B-cell linker protein (457 aa).

Residues 38 to 306 form a disordered region; the sequence is KLKVKGPPSV…FPPTQKPVLQ (269 aa). Over residues 57–74 the composition is skewed to acidic residues; sequence PADEEEQWSDDFDSDYEN. Tyr-72, Tyr-84, Tyr-96, Tyr-178, and Tyr-189 each carry phosphotyrosine; by SYK. Over residues 172–187 the composition is skewed to acidic residues; that stretch reads LEDEADYVVPVEDNDE. Composition is skewed to polar residues over residues 206–218 and 256–270; these read VNRS…SSKH and PLKT…NASN. Positions 272–290 are enriched in basic and acidic residues; sequence CEEKPVPAERHRGSSHRQD. Positions 347-454 constitute an SH2 domain; it reads WYAGACDRKS…KDSTRLKYAV (108 aa).

As to quaternary structure, associates with PLCG1, VAV1 and NCK1 in a B-cell antigen receptor-dependent fashion. Interacts with VAV3, PLCG2 and GRB2. Interacts through its SH2 domain with CD79A. Interacts (via SH2 domain) with SYK; phosphorylated and activated by SYK. Interacts (via SH2 domain) with SCIMP; this interaction is dependent on phosphorylation of SCIMP 'Tyr-120'. Post-translationally, following BCR activation, phosphorylated on tyrosine residues by SYK and LYN. When phosphorylated, serves as a scaffold to assemble downstream targets of antigen activation, including PLCG1, VAV1, GRB2 and NCK1. Phosphorylation of Tyr-84, Tyr-178 and Tyr-189 facilitates PLCG1 binding. Phosphorylation of Tyr-96 facilitates BTK binding. Phosphorylation of Tyr-72 facilitates VAV1 and NCK1 binding. Phosphorylation is required for both Ca(2+) and MAPK signaling pathways.

Its subcellular location is the cytoplasm. The protein localises to the cell membrane. In terms of biological role, functions as a central linker protein, downstream of the B-cell receptor (BCR), bridging the SYK kinase to a multitude of signaling pathways and regulating biological outcomes of B-cell function and development. Plays a role in the activation of ERK/EPHB2, MAP kinase p38 and JNK. Modulates AP1 activation. Important for the activation of NF-kappa-B and NFAT. Plays an important role in BCR-mediated PLCG1 and PLCG2 activation and Ca(2+) mobilization and is required for trafficking of the BCR to late endosomes. However, does not seem to be required for pre-BCR-mediated activation of MAP kinase and phosphatidyl-inositol 3 (PI3) kinase signaling. May be required for the RAC1-JNK pathway. Plays a critical role in orchestrating the pro-B cell to pre-B cell transition. May play an important role in BCR-induced B-cell apoptosis. This Rattus norvegicus (Rat) protein is B-cell linker protein (Blnk).